The chain runs to 409 residues: Inactive serine protease 35 (409 aa).

Residues 1–20 (MENTLLWLVILIPGWALSDG) form the signal peptide. A glycan (N-linked (GlcNAc...) asparagine) is linked at Asn90. One can recognise a Peptidase S1 domain in the interval 124-404 (VYGTDSRFSI…ICLWIHGNAA (281 aa)). Cys154 and Cys170 are joined by a disulfide. Over residues 188–207 (VLKMRNKGGRKKRRGSKRSR) the composition is skewed to basic residues. The interval 188-247 (VLKMRNKGGRKKRRGSKRSRREAESAGQSQAHLRESTTQRPGKKSRRGPRVTQGRPSFQW) is disordered.

Belongs to the peptidase S1 family. As to expression, in ovary, it localizes to the theca cells of pre-antral follicles, the theca and granulosa cells of pre-ovulatory and ovulatory follicles, as well as to the developing corpus luteum.

Its subcellular location is the secreted. This is Inactive serine protease 35 (Prss35) from Mus musculus (Mouse).